The sequence spans 227 residues: ATP synthase F(0) complex subunit a (227 aa).

Transmembrane regions (helical) follow at residues 14-34 (LLGIPLILLSLLFPTLLLPSP), 69-89 (WALILTSLMTFLLLINLLGLL), 98-118 (QLSMNMALAFPLWLATLLTGL), 139-159 (IPALILIETTSLLIRPLALGV), 174-194 (LISTATLALLPTMPTISVLTA), and 196-216 (VLLLLTILELAVAMIQAYVFV).

This sequence belongs to the ATPase A chain family. As to quaternary structure, component of the ATP synthase complex composed at least of ATP5F1A/subunit alpha, ATP5F1B/subunit beta, ATP5MC1/subunit c (homooctomer), MT-ATP6/subunit a, MT-ATP8/subunit 8, ATP5ME/subunit e, ATP5MF/subunit f, ATP5MG/subunit g, ATP5MK/subunit k, ATP5MJ/subunit j, ATP5F1C/subunit gamma, ATP5F1D/subunit delta, ATP5F1E/subunit epsilon, ATP5PF/subunit F6, ATP5PB/subunit b, ATP5PD/subunit d, ATP5PO/subunit OSCP. ATP synthase complex consists of a soluble F(1) head domain (subunits alpha(3) and beta(3)) - the catalytic core - and a membrane F(0) domain - the membrane proton channel (subunits c, a, 8, e, f, g, k and j). These two domains are linked by a central stalk (subunits gamma, delta, and epsilon) rotating inside the F1 region and a stationary peripheral stalk (subunits F6, b, d, and OSCP). Interacts with DNAJC30; interaction is direct.

The protein resides in the mitochondrion inner membrane. The catalysed reaction is H(+)(in) = H(+)(out). Functionally, subunit a, of the mitochondrial membrane ATP synthase complex (F(1)F(0) ATP synthase or Complex V) that produces ATP from ADP in the presence of a proton gradient across the membrane which is generated by electron transport complexes of the respiratory chain. ATP synthase complex consist of a soluble F(1) head domain - the catalytic core - and a membrane F(1) domain - the membrane proton channel. These two domains are linked by a central stalk rotating inside the F(1) region and a stationary peripheral stalk. During catalysis, ATP synthesis in the catalytic domain of F(1) is coupled via a rotary mechanism of the central stalk subunits to proton translocation. With the subunit c (ATP5MC1), forms the proton-conducting channel in the F(0) domain, that contains two crucial half-channels (inlet and outlet) that facilitate proton movement from the mitochondrial intermembrane space (IMS) into the matrix. Protons are taken up via the inlet half-channel and released through the outlet half-channel, following a Grotthuss mechanism. The sequence is that of ATP synthase F(0) complex subunit a from Struthio camelus (Common ostrich).